Here is a 185-residue protein sequence, read N- to C-terminus: ATP synthase subunit b 2 (185 aa).

Residues 1–25 (MAESHGNAHGATAHTEADGGHKAPF) are disordered. A helical membrane pass occupies residues 34–56 (ASQLVSLTIAFVALYLISSRLAL).

The protein belongs to the ATPase B chain family. In terms of assembly, F-type ATPases have 2 components, F(1) - the catalytic core - and F(0) - the membrane proton channel. F(1) has five subunits: alpha(3), beta(3), gamma(1), delta(1), epsilon(1). F(0) has three main subunits: a(1), b(2) and c(10-14). The alpha and beta chains form an alternating ring which encloses part of the gamma chain. F(1) is attached to F(0) by a central stalk formed by the gamma and epsilon chains, while a peripheral stalk is formed by the delta and b chains.

The protein resides in the cell inner membrane. Functionally, f(1)F(0) ATP synthase produces ATP from ADP in the presence of a proton or sodium gradient. F-type ATPases consist of two structural domains, F(1) containing the extramembraneous catalytic core and F(0) containing the membrane proton channel, linked together by a central stalk and a peripheral stalk. During catalysis, ATP synthesis in the catalytic domain of F(1) is coupled via a rotary mechanism of the central stalk subunits to proton translocation. Component of the F(0) channel, it forms part of the peripheral stalk, linking F(1) to F(0). The b'-subunit is a diverged and duplicated form of b found in plants and photosynthetic bacteria. This Nitrobacter winogradskyi (strain ATCC 25391 / DSM 10237 / CIP 104748 / NCIMB 11846 / Nb-255) protein is ATP synthase subunit b 2 (atpF2).